A 315-amino-acid polypeptide reads, in one-letter code: Aspartate carbamoyltransferase catalytic subunit (315 aa).

Arg65 and Thr66 together coordinate carbamoyl phosphate. Position 93 (Lys93) interacts with L-aspartate. Arg115, His145, and Gln148 together coordinate carbamoyl phosphate. Residues Arg179 and Arg234 each coordinate L-aspartate. Carbamoyl phosphate contacts are provided by Gly275 and Pro276.

The protein belongs to the aspartate/ornithine carbamoyltransferase superfamily. ATCase family. Heterododecamer (2C3:3R2) of six catalytic PyrB chains organized as two trimers (C3), and six regulatory PyrI chains organized as three dimers (R2).

The enzyme catalyses carbamoyl phosphate + L-aspartate = N-carbamoyl-L-aspartate + phosphate + H(+). It functions in the pathway pyrimidine metabolism; UMP biosynthesis via de novo pathway; (S)-dihydroorotate from bicarbonate: step 2/3. Its function is as follows. Catalyzes the condensation of carbamoyl phosphate and aspartate to form carbamoyl aspartate and inorganic phosphate, the committed step in the de novo pyrimidine nucleotide biosynthesis pathway. In Xanthomonas campestris pv. campestris (strain 8004), this protein is Aspartate carbamoyltransferase catalytic subunit.